The following is a 178-amino-acid chain: DNA-directed RNA polymerase subunit beta (178 aa).

Belongs to the RNA polymerase beta chain family. The RNAP catalytic core consists of 2 alpha, 1 beta, 1 beta' and 1 omega subunit. When a sigma factor is associated with the core the holoenzyme is formed, which can initiate transcription.

It catalyses the reaction RNA(n) + a ribonucleoside 5'-triphosphate = RNA(n+1) + diphosphate. DNA-dependent RNA polymerase catalyzes the transcription of DNA into RNA using the four ribonucleoside triphosphates as substrates. This is DNA-directed RNA polymerase subunit beta (rpoB) from Liberibacter asiaticus (Citrus greening disease).